The chain runs to 1441 residues: ABC transporter G family member 41 (1441 aa).

Over residues M1–E14 the composition is skewed to basic and acidic residues. Positions M1–L28 are disordered. One can recognise an ABC transporter 1 domain in the interval A159–E432. G192 to T199 contributes to the ATP binding site. Residues D510–F722 form the ABC transmembrane type-2 1 domain. The next 6 helical transmembrane spans lie at F528–F548, S566–V586, F600–V620, F642–C662, A672–I692, and A758–I778. Residues I838–P1090 enclose the ABC transporter 2 domain. G883–T890 is an ATP binding site. The region spanning E1163 to F1379 is the ABC transmembrane type-2 2 domain. 7 helical membrane-spanning segments follow: residues I1187–I1207, G1215–C1235, I1272–Y1292, F1300–I1320, V1329–V1349, W1357–T1377, and L1413–I1433.

The protein belongs to the ABC transporter superfamily. ABCG family. PDR (TC 3.A.1.205) subfamily.

The protein resides in the membrane. May be a general defense protein. The protein is ABC transporter G family member 41 of Oryza sativa subsp. japonica (Rice).